The following is a 142-amino-acid chain: MKTFVAKPETVKRDWYIVDAEGKTLGRIATEIASRLRGKHKAEYTPHVDTGDYIIVVNAEKVHVTGKKFTDKIYHSHSGFPGGIKSISFDKLIKRKPEMVIEAAVKGMLPKGPLGRAMFRKLKVYAGAEHAHAAQQPQVLDI.

Belongs to the universal ribosomal protein uL13 family. As to quaternary structure, part of the 50S ribosomal subunit.

In terms of biological role, this protein is one of the early assembly proteins of the 50S ribosomal subunit, although it is not seen to bind rRNA by itself. It is important during the early stages of 50S assembly. The protein is Large ribosomal subunit protein uL13 of Aeromonas salmonicida (strain A449).